The chain runs to 309 residues: Olfactory receptor 8B4 (309 aa).

Over methionine 1–leucine 25 the chain is Extracellular. Asparagine 5 is a glycosylation site (N-linked (GlcNAc...) asparagine). Residues proline 26–isoleucine 46 traverse the membrane as a helical segment. Residues threonine 47 to serine 54 lie on the Cytoplasmic side of the membrane. A helical transmembrane segment spans residues leucine 55 to cysteine 75. The Extracellular segment spans residues valine 76–threonine 98. Cysteines 96 and 188 form a disulfide. Residues glutamine 99–tyrosine 119 traverse the membrane as a helical segment. The Cytoplasmic portion of the chain corresponds to aspartate 120–arginine 138. Residues valine 139–threonine 159 form a helical membrane-spanning segment. At glycine 160–leucine 196 the chain is on the extracellular side. A helical transmembrane segment spans residues valine 197–serine 216. Residues tyrosine 217–alanine 236 lie on the Cytoplasmic side of the membrane. The chain crosses the membrane as a helical span at residues phenylalanine 237 to threonine 257. The Extracellular portion of the chain corresponds to tyrosine 258 to glycine 270. The helical transmembrane segment at arginine 271 to leucine 291 threads the bilayer. The Cytoplasmic segment spans residues arginine 292 to phenylalanine 309.

It belongs to the G-protein coupled receptor 1 family.

It is found in the cell membrane. Its function is as follows. Odorant receptor. The sequence is that of Olfactory receptor 8B4 (OR8B4) from Homo sapiens (Human).